A 375-amino-acid polypeptide reads, in one-letter code: 23S rRNA (uracil(747)-C(5))-methyltransferase RlmC (375 aa).

Cysteine 3, cysteine 11, cysteine 14, and cysteine 87 together coordinate [4Fe-4S] cluster. Glutamine 212, phenylalanine 241, glutamate 262, and asparagine 307 together coordinate S-adenosyl-L-methionine. Cysteine 334 (nucleophile) is an active-site residue.

It belongs to the class I-like SAM-binding methyltransferase superfamily. RNA M5U methyltransferase family. RlmC subfamily.

The catalysed reaction is uridine(747) in 23S rRNA + S-adenosyl-L-methionine = 5-methyluridine(747) in 23S rRNA + S-adenosyl-L-homocysteine + H(+). Its function is as follows. Catalyzes the formation of 5-methyl-uridine at position 747 (m5U747) in 23S rRNA. The chain is 23S rRNA (uracil(747)-C(5))-methyltransferase RlmC from Salmonella typhi.